Here is a 73-residue protein sequence, read N- to C-terminus: DNA-directed RNA polymerase subunit epsilon (73 aa).

Belongs to the RNA polymerase subunit epsilon family. As to quaternary structure, RNAP is composed of a core of 2 alpha, a beta and a beta' subunit. The core is associated with a delta subunit, and at least one of epsilon or omega. When a sigma factor is associated with the core the holoenzyme is formed, which can initiate transcription.

The catalysed reaction is RNA(n) + a ribonucleoside 5'-triphosphate = RNA(n+1) + diphosphate. Its function is as follows. A non-essential component of RNA polymerase (RNAP). The polypeptide is DNA-directed RNA polymerase subunit epsilon (Lactobacillus acidophilus (strain ATCC 700396 / NCK56 / N2 / NCFM)).